The sequence spans 375 residues: 23S rRNA (uracil(747)-C(5))-methyltransferase RlmC (375 aa).

Residues C3, C11, C14, and C87 each coordinate [4Fe-4S] cluster. Positions 212, 241, 262, and 307 each coordinate S-adenosyl-L-methionine. Catalysis depends on C334, which acts as the Nucleophile.

Belongs to the class I-like SAM-binding methyltransferase superfamily. RNA M5U methyltransferase family. RlmC subfamily.

It carries out the reaction uridine(747) in 23S rRNA + S-adenosyl-L-methionine = 5-methyluridine(747) in 23S rRNA + S-adenosyl-L-homocysteine + H(+). Catalyzes the formation of 5-methyl-uridine at position 747 (m5U747) in 23S rRNA. The sequence is that of 23S rRNA (uracil(747)-C(5))-methyltransferase RlmC from Escherichia coli (strain SMS-3-5 / SECEC).